Consider the following 255-residue polypeptide: uncharacterized protein (255 aa).

This sequence belongs to the methyltransferase superfamily.

This is an uncharacterized protein from Bacillus subtilis (strain 168).